The primary structure comprises 2528 residues: Highly reducing polyketide synthase pspA (2528 aa).

The disordered stretch occupies residues Met-1–Pro-53. Residues Asp-24 to Ser-42 are compositionally biased toward polar residues. One can recognise a Ketosynthase family 3 (KS3) domain in the interval Val-63–Ser-483. Catalysis depends on for beta-ketoacyl synthase activity residues Cys-235, His-371, and His-406. A malonyl-CoA:ACP transacylase (MAT) domain region spans residues Thr-590–Glu-909. An N-terminal hotdog fold region spans residues His-961–Glu-1089. The tract at residues His-961–Ile-1230 is dehydratase (DH) domain. A PKS/mFAS DH domain is found at His-961–Ala-1244. His-993 acts as the Proton acceptor; for dehydratase activity in catalysis. The interval Pro-1099–Ala-1244 is C-terminal hotdog fold. The active-site Proton donor; for dehydratase activity is Asp-1160. Residues Val-1409–His-1587 are methyltransferase (CMet) domain. Residues Gly-1803 to Ile-2119 form an enoyl reductase (ER) (ER) domain region. The tract at residues Arg-2143–Gln-2322 is ketoreductase (KR) domain. In terms of domain architecture, Carrier spans Glu-2447 to Leu-2525. The residue at position 2485 (Ser-2485) is an O-(pantetheine 4'-phosphoryl)serine.

The enzyme catalyses 9 malonyl-CoA + acetyl-CoA + S-adenosyl-L-methionine + 13 NADPH + 20 H(+) = soppiline A + S-adenosyl-L-homocysteine + 9 CO2 + 13 NADP(+) + 10 CoA + 7 H2O. It participates in secondary metabolite biosynthesis. Functionally, highly reducing polyketide synthase; part of the gene cluster that mediates the biosynthesis of the alkylresorcinols called soppilines. The biosynthesis starts with the HR-PKS pspA-catalyzed carbon chain assembly through nine chain elongation cycles, using acetyl CoA and malonyl CoA as a starter and extender units, respectively, to produce the polyketide soppiline A. In the first round, the KR, DH, and CMeT domains work to produce 2-methyl-2-butenyl thioester. In rounds 2 to 5, the KR, DH, and ER domains fully catalyze the reduction of the elongated beta-ketothioester, resulting in the insertion of eight methylene units. The unusual Z,E,Z-triene motif is likely constructed during rounds 6 to 8. Typically, the DH domain introduces a double bond at an alpha,beta-position of an elongated polyketide chain, with the dehydration of a beta-hydroxy group. The last extension cycle would be carried out with L-oriented beta-ketoreduction by the KR domain to produce beta-hydroxy carboxylic acid soppiline A. The type III PKS pspB intercepts the elongated polyketide chain at round 8 from the HR-PKS pspA, followed by a tri-keto extension and decarboxylative aldol cyclization to produce 1,3,5-trisubstituted alkylresorcinol soppiline B. Subsequently, the cytochrome P450 monooxygenase pspC catalyzes three-step oxidations at the C-4 methyl group to carboxylic acid to yield soppiline C. The polypeptide is Highly reducing polyketide synthase pspA (Penicillium soppii).